The chain runs to 151 residues: SsrA-binding protein (151 aa).

This sequence belongs to the SmpB family.

The protein resides in the cytoplasm. Its function is as follows. Required for rescue of stalled ribosomes mediated by trans-translation. Binds to transfer-messenger RNA (tmRNA), required for stable association of tmRNA with ribosomes. tmRNA and SmpB together mimic tRNA shape, replacing the anticodon stem-loop with SmpB. tmRNA is encoded by the ssrA gene; the 2 termini fold to resemble tRNA(Ala) and it encodes a 'tag peptide', a short internal open reading frame. During trans-translation Ala-aminoacylated tmRNA acts like a tRNA, entering the A-site of stalled ribosomes, displacing the stalled mRNA. The ribosome then switches to translate the ORF on the tmRNA; the nascent peptide is terminated with the 'tag peptide' encoded by the tmRNA and targeted for degradation. The ribosome is freed to recommence translation, which seems to be the essential function of trans-translation. The chain is SsrA-binding protein from Chlamydia trachomatis serovar A (strain ATCC VR-571B / DSM 19440 / HAR-13).